The sequence spans 283 residues: NAD(P)H-hydrate epimerase (283 aa).

A mitochondrion-targeting transit peptide spans 1-28 (MLGVRALFGIGLLVTSRGGFVLTHTRAC). Residues 61 to 270 (AQQIDEELFS…VLEQKYQLNL (210 aa)) form the YjeF N-terminal domain. Residue 115–119 (NNGGD) coordinates (6S)-NADPHX. The K(+) site is built by N116 and D180. (6S)-NADPHX is bound by residues 184–190 (GFSFKGA) and D213. A K(+)-binding site is contributed by S216.

Belongs to the NnrE/AIBP family. In terms of assembly, homodimer. Interacts with apoa1a. Binds to high-density lipoprotein. K(+) is required as a cofactor.

Its subcellular location is the mitochondrion. It is found in the secreted. It catalyses the reaction (6R)-NADHX = (6S)-NADHX. The enzyme catalyses (6R)-NADPHX = (6S)-NADPHX. Functionally, catalyzes the epimerization of the S- and R-forms of NAD(P)HX, a damaged form of NAD(P)H that is a result of enzymatic or heat-dependent hydration. This is a prerequisite for the S-specific NAD(P)H-hydrate dehydratase to allow the repair of both epimers of NAD(P)HX. The chain is NAD(P)H-hydrate epimerase from Danio rerio (Zebrafish).